We begin with the raw amino-acid sequence, 112 residues long: MPVLLGIPLLLRFLGFLLVTLFGYLLTFLKKGFGKIAIAISLFLALIIGLNSILVGYLSDISAQLPSDFVQGVQLILPSNALPCFYVILSVKAAIFIFDVKQKIVSYLDWDK.

3 helical membrane passes run 3 to 23, 36 to 56, and 80 to 100; these read VLLGIPLLLRFLGFLLVTLFG, IAIAISLFLALIIGLNSILVG, and NALPCFYVILSVKAAIFIFDV.

It belongs to the inovirus G6P protein family. In terms of assembly, interacts with G3P; this interaction is required for proper integration of G3P and G6P into the virion.

It is found in the virion. The protein resides in the host membrane. Its function is as follows. Plays essential roles both in the entry of the viral genome into the bacterial host and in budding process. The formation of the G3P-G6P complex termed adsorption complex is essential for correct termination of filamentous phage assembly. This chain is Head virion protein G6P (VI), found in Escherichia coli (Bacteriophage f1).